Reading from the N-terminus, the 509-residue chain is ATP synthase subunit alpha (509 aa).

Gly169–Thr176 is an ATP binding site.

This sequence belongs to the ATPase alpha/beta chains family. In terms of assembly, F-type ATPases have 2 components, CF(1) - the catalytic core - and CF(0) - the membrane proton channel. CF(1) has five subunits: alpha(3), beta(3), gamma(1), delta(1), epsilon(1). CF(0) has four main subunits: a(1), b(1), b'(1) and c(9-12).

The protein localises to the cell inner membrane. The enzyme catalyses ATP + H2O + 4 H(+)(in) = ADP + phosphate + 5 H(+)(out). Its function is as follows. Produces ATP from ADP in the presence of a proton gradient across the membrane. The alpha chain is a regulatory subunit. The protein is ATP synthase subunit alpha of Bradyrhizobium sp. (strain BTAi1 / ATCC BAA-1182).